Reading from the N-terminus, the 237-residue chain is 7-cyano-7-deazaguanine synthase (237 aa).

An ATP-binding site is contributed by 10-20 (FSGGQDSTTCL). Zn(2+) is bound by residues Cys-189, Cys-198, Cys-201, and Cys-204.

Belongs to the QueC family. Zn(2+) serves as cofactor.

It catalyses the reaction 7-carboxy-7-deazaguanine + NH4(+) + ATP = 7-cyano-7-deazaguanine + ADP + phosphate + H2O + H(+). It functions in the pathway purine metabolism; 7-cyano-7-deazaguanine biosynthesis. Its function is as follows. Catalyzes the ATP-dependent conversion of 7-carboxy-7-deazaguanine (CDG) to 7-cyano-7-deazaguanine (preQ(0)). The sequence is that of 7-cyano-7-deazaguanine synthase from Aeromonas salmonicida (strain A449).